The following is a 156-amino-acid chain: MEKTFPMTQEGLDKLKLELENLKLVKRPEVIDRIKVARSYGDLSENSEYEAAKDEQAFIEGRISTVETMIRYAEIVDNAKIAKDEVALGKNVTFVEVGETDEESYQIVGTAEADPFSGKISNESPIARVLIGKKVGDIVNVPLPVGEMTVKIVKVD.

The stretch at 7-27 (MTQEGLDKLKLELENLKLVKR) forms a coiled coil.

The protein belongs to the GreA/GreB family.

Functionally, necessary for efficient RNA polymerase transcription elongation past template-encoded arresting sites. The arresting sites in DNA have the property of trapping a certain fraction of elongating RNA polymerases that pass through, resulting in locked ternary complexes. Cleavage of the nascent transcript by cleavage factors such as GreA or GreB allows the resumption of elongation from the new 3'terminus. GreA releases sequences of 2 to 3 nucleotides. The sequence is that of Transcription elongation factor GreA from Lactococcus lactis subsp. lactis (strain IL1403) (Streptococcus lactis).